We begin with the raw amino-acid sequence, 91 residues long: UPF0223 protein SACOL1106 (91 aa).

The protein belongs to the UPF0223 family.

This Staphylococcus aureus (strain COL) protein is UPF0223 protein SACOL1106.